The sequence spans 412 residues: Transforming growth factor beta-3 proprotein (412 aa).

Positions Met1–Ser23 are cleaved as a signal peptide. N-linked (GlcNAc...) asparagine glycosylation is found at Asn74, Asn135, and Asn142. A Cell attachment site motif is present at residues Arg261 to Asp263. Residue Gln293 is modified to N5-methylglutamine. Intrachain disulfides connect Cys307–Cys316, Cys315–Cys378, Cys344–Cys409, and Cys348–Cys411.

The protein belongs to the TGF-beta family. Interacts with ASPN. Latency-associated peptide: Homodimer; disulfide-linked. Latency-associated peptide: Interacts with Transforming growth factor beta-3 (TGF-beta-3) chain; interaction is non-covalent and maintains (TGF-beta-3) in a latent state. Latency-associated peptide: Interacts with LRRC32/GARP; leading to regulate activation of TGF-beta-3 and promote epithelial fusion during palate development. Latency-associated peptide: Interacts (via cell attachment site) with integrins, leading to release of the active TGF-beta-3. Transforming growth factor beta-3: Homodimer; disulfide-linked. Transforming growth factor beta-3: Interacts with TGF-beta receptors (TGFBR1 and TGFBR2), leading to signal transduction. Post-translationally, transforming growth factor beta-3 proprotein: The precursor proprotein is cleaved in the Golgi apparatus to form Transforming growth factor beta-3 (TGF-beta-3) and Latency-associated peptide (LAP) chains, which remain non-covalently linked, rendering TGF-beta-3 inactive. In terms of processing, methylated at Gln-293 by N6AMT1. As to expression, expressed in cardiomyocytes.

Its subcellular location is the secreted. It localises to the extracellular space. The protein resides in the extracellular matrix. Its function is as follows. Transforming growth factor beta-3 proprotein: Precursor of the Latency-associated peptide (LAP) and Transforming growth factor beta-3 (TGF-beta-3) chains, which constitute the regulatory and active subunit of TGF-beta-3, respectively. Required to maintain the Transforming growth factor beta-3 (TGF-beta-3) chain in a latent state during storage in extracellular matrix. Associates non-covalently with TGF-beta-3 and regulates its activation via interaction with 'milieu molecules', such as LTBP1 and LRRC32/GARP, that control activation of TGF-beta-3. Interaction with integrins results in distortion of the Latency-associated peptide chain and subsequent release of the active TGF-beta-3. In terms of biological role, transforming growth factor beta-3: Multifunctional protein that regulates embryogenesis and cell differentiation and is required in various processes such as secondary palate development. Activation into mature form follows different steps: following cleavage of the proprotein in the Golgi apparatus, Latency-associated peptide (LAP) and Transforming growth factor beta-3 (TGF-beta-3) chains remain non-covalently linked rendering TGF-beta-3 inactive during storage in extracellular matrix. At the same time, LAP chain interacts with 'milieu molecules', such as LTBP1 and LRRC32/GARP that control activation of TGF-beta-3 and maintain it in a latent state during storage in extracellular milieus. TGF-beta-3 is released from LAP by integrins: integrin-binding results in distortion of the LAP chain and subsequent release of the active TGF-beta-3. Once activated following release of LAP, TGF-beta-3 acts by binding to TGF-beta receptors (TGFBR1 and TGFBR2), which transduce signal. The polypeptide is Transforming growth factor beta-3 proprotein (Tgfb3) (Rattus norvegicus (Rat)).